The following is a 140-amino-acid chain: Small ribosomal subunit protein uS12m (140 aa).

The N-terminal 30 residues, 1–30 (MNFLRQSFGITKQLASQAIQCSYETAVRGM), are a transit peptide targeting the mitochondrion.

It belongs to the universal ribosomal protein uS12 family.

The protein localises to the mitochondrion. This chain is Small ribosomal subunit protein uS12m (tko), found in Drosophila melanogaster (Fruit fly).